Reading from the N-terminus, the 294-residue chain is Nucleotide-binding protein CLJ_B3680 (294 aa).

Glycine 8 to threonine 15 serves as a coordination point for ATP. Aspartate 59 to glycine 62 provides a ligand contact to GTP.

It belongs to the RapZ-like family.

Its function is as follows. Displays ATPase and GTPase activities. This Clostridium botulinum (strain 657 / Type Ba4) protein is Nucleotide-binding protein CLJ_B3680.